A 35-amino-acid chain; its full sequence is Manganese peroxidase (35 aa).

Positions 1–11 are enriched in basic and acidic residues; sequence LSLLGHDERVT. Residues 1–35 are disordered; that stretch reads LSLLGHDERVTPEPFDSVTAQNARGNQADVQSLPR. Residues 18-35 are compositionally biased toward polar residues; the sequence is VTAQNARGNQADVQSLPR.

It belongs to the peroxidase family. Heme b serves as cofactor. Requires Ca(2+) as cofactor.

It carries out the reaction 2 Mn(2+) + H2O2 + 2 H(+) = 2 Mn(3+) + 2 H2O. Functionally, has manganese peroxidase activity. The polypeptide is Manganese peroxidase (Irpex lacteus (Milk-white toothed polypore)).